The following is a 151-amino-acid chain: Large ribosomal subunit protein bL9 (151 aa).

Belongs to the bacterial ribosomal protein bL9 family.

Functionally, binds to the 23S rRNA. The chain is Large ribosomal subunit protein bL9 from Rhodococcus erythropolis (strain PR4 / NBRC 100887).